The chain runs to 360 residues: Photosystem II protein D1 2 (360 aa).

A run of 3 helical transmembrane segments spans residues 29–46 (YIGWFGVLMIPTLLTAVT), 118–133 (HYMIGCICYLGRQWEY), and 142–156 (WICVAYSAPLAATYS). Chlorophyll a is bound at residue histidine 118. Pheophytin a is bound at residue tyrosine 126. [CaMn4O5] cluster is bound by residues aspartate 170 and glutamate 189. A helical transmembrane segment spans residues 197–218 (FHMFGVAGVLGGSLFAAMHGSL). Residue histidine 198 participates in chlorophyll a binding. A quinone-binding positions include histidine 215 and 264–265 (SF). Residue histidine 215 participates in Fe cation binding. Histidine 272 is a binding site for Fe cation. The chain crosses the membrane as a helical span at residues 274 to 288 (FLGAWPVVCIWLTAM). [CaMn4O5] cluster-binding residues include histidine 332, glutamate 333, aspartate 342, and alanine 344. A propeptide spanning residues 345-360 (AGESAPVALTAPVING) is cleaved from the precursor.

This sequence belongs to the reaction center PufL/M/PsbA/D family. In terms of assembly, PSII is composed of 1 copy each of membrane proteins PsbA, PsbB, PsbC, PsbD, PsbE, PsbF, PsbH, PsbI, PsbJ, PsbK, PsbL, PsbM, PsbT, PsbX, PsbY, PsbZ, Psb30/Ycf12, peripheral proteins PsbO, CyanoQ (PsbQ), PsbU, PsbV and a large number of cofactors. It forms dimeric complexes. The D1/D2 heterodimer binds P680, chlorophylls that are the primary electron donor of PSII, and subsequent electron acceptors. It shares a non-heme iron and each subunit binds pheophytin, quinone, additional chlorophylls, carotenoids and lipids. D1 provides most of the ligands for the Mn4-Ca-O5 cluster of the oxygen-evolving complex (OEC). There is also a Cl(-1) ion associated with D1 and D2, which is required for oxygen evolution. The PSII complex binds additional chlorophylls, carotenoids and specific lipids. serves as cofactor. Tyr-161 forms a radical intermediate that is referred to as redox-active TyrZ, YZ or Y-Z. Post-translationally, C-terminally processed by CtpA; processing is essential to allow assembly of the oxygen-evolving complex and thus photosynthetic growth.

The protein localises to the cellular thylakoid membrane. It carries out the reaction 2 a plastoquinone + 4 hnu + 2 H2O = 2 a plastoquinol + O2. Photosystem II (PSII) is a light-driven water:plastoquinone oxidoreductase that uses light energy to abstract electrons from H(2)O, generating O(2) and a proton gradient subsequently used for ATP formation. It consists of a core antenna complex that captures photons, and an electron transfer chain that converts photonic excitation into a charge separation. The D1/D2 (PsbA/PsbD) reaction center heterodimer binds P680, the primary electron donor of PSII as well as several subsequent electron acceptors. The protein is Photosystem II protein D1 2 of Acaryochloris marina (strain MBIC 11017).